A 132-amino-acid chain; its full sequence is uncharacterized protein (132 aa).

This is an uncharacterized protein from Saccharomyces cerevisiae (strain ATCC 204508 / S288c) (Baker's yeast).